Reading from the N-terminus, the 540-residue chain is Threonine--tRNA ligase catalytic subunit (540 aa).

The tract at residues 134–428 (DHRIIGERLD…LLEHFRGKLP (295 aa)) is catalytic. Zn(2+) contacts are provided by cysteine 226, histidine 277, and histidine 405.

Belongs to the class-II aminoacyl-tRNA synthetase family. As to quaternary structure, homodimer. Probably interacts with its editing subunit. Requires Zn(2+) as cofactor.

The protein localises to the cytoplasm. The catalysed reaction is tRNA(Thr) + L-threonine + ATP = L-threonyl-tRNA(Thr) + AMP + diphosphate + H(+). In terms of biological role, catalyzes the attachment of threonine to tRNA(Thr) in a two-step reaction: L-threonine is first activated by ATP to form Thr-AMP and then transferred to the acceptor end of tRNA(Thr). Also activates L-serine and transfers it to tRNA(Thr) but cannot deacylate incorrectly charged amino acid; unlike most archaea the editing function is found in a freestanding protein. In Sulfurisphaera tokodaii (strain DSM 16993 / JCM 10545 / NBRC 100140 / 7) (Sulfolobus tokodaii), this protein is Threonine--tRNA ligase catalytic subunit.